A 358-amino-acid chain; its full sequence is MEMTMRWFGSNADKVELSEIAQVPGVKGVVGMIMDIPAGEVWPKERIKALKEEIEAAGLSLKVIESVNIHDDIKIGLPTRDKYIENYKETIRNLAEFGIEVICYNFMPVFDWLKSDLDYRLADNSQTMAFVAEDIPENPQEIIDRVQAADGGFSLPGWEPERLSEVKDLFEAYKNVDEHKLRENFAYFLKAIIPTCEEVGIKMAVHPDDPPYPMFGLPRVVKNREDLDWICNVVDSPSNAITLCTGSIAEDPANNVYEIMAEFVKRDRIPFAHVRNIKFLPSGEKDFYEAPHMSEYGSLDMYKILKAMYDNGFDGYIRPDHGRMIWGETGRPGYGLYDRALGASYLNGLWEALEKNKQ.

Belongs to the mannonate dehydratase family. The cofactor is Fe(2+). Mn(2+) serves as cofactor.

The enzyme catalyses D-mannonate = 2-dehydro-3-deoxy-D-gluconate + H2O. Its pathway is carbohydrate metabolism; pentose and glucuronate interconversion. Its function is as follows. Catalyzes the dehydration of D-mannonate. The protein is Mannonate dehydratase of Lactococcus lactis subsp. cremoris (strain MG1363).